We begin with the raw amino-acid sequence, 448 residues long: N-succinylarginine dihydrolase (448 aa).

Residues 19–28, Asn110, and 137–138 each bind substrate; these read GGLSYGNVAS and HR. Residue Glu174 is part of the active site. Arg214 is a binding site for substrate. His250 is an active-site residue. The substrate site is built by Asp252 and Asn365. Cys371 acts as the Nucleophile in catalysis.

Belongs to the succinylarginine dihydrolase family. In terms of assembly, homodimer.

It carries out the reaction N(2)-succinyl-L-arginine + 2 H2O + 2 H(+) = N(2)-succinyl-L-ornithine + 2 NH4(+) + CO2. It participates in amino-acid degradation; L-arginine degradation via AST pathway; L-glutamate and succinate from L-arginine: step 2/5. In terms of biological role, catalyzes the hydrolysis of N(2)-succinylarginine into N(2)-succinylornithine, ammonia and CO(2). The polypeptide is N-succinylarginine dihydrolase (Pseudomonas savastanoi pv. phaseolicola (strain 1448A / Race 6) (Pseudomonas syringae pv. phaseolicola (strain 1448A / Race 6))).